The primary structure comprises 160 residues: MKLEVLPLDQKTFSAYGDVIETQEREFFHINNGLVERYHDLAKVEVLEQDRTLISINRAQPAAMPIVVHELERHPLGTQAFVPMNGEAFVVIVALGDDKPDLSTLRAFISNGRQGVNYHRNVWHHPLFAWQTVTDFLTVDRGGSDNCDVESIPTHELCFA.

It belongs to the ureidoglycolate lyase family. Homodimer. It depends on Ni(2+) as a cofactor.

It carries out the reaction (S)-ureidoglycolate = urea + glyoxylate. The protein operates within nitrogen metabolism; (S)-allantoin degradation. Its function is as follows. Catalyzes the catabolism of the allantoin degradation intermediate (S)-ureidoglycolate, generating urea and glyoxylate. Involved in the utilization of allantoin as nitrogen source. The sequence is that of Ureidoglycolate lyase from Salmonella typhimurium (strain LT2 / SGSC1412 / ATCC 700720).